A 304-amino-acid polypeptide reads, in one-letter code: Aspartate carbamoyltransferase catalytic subunit (304 aa).

Carbamoyl phosphate-binding residues include Arg49 and Thr50. Lys77 contacts L-aspartate. Carbamoyl phosphate-binding residues include Arg99, His127, and Gln130. L-aspartate-binding residues include Arg160 and Arg211. Carbamoyl phosphate is bound by residues Ala250 and Pro251. Position 303 is a phosphoserine (Ser303).

Belongs to the aspartate/ornithine carbamoyltransferase superfamily. ATCase family. As to quaternary structure, heterododecamer (2C3:3R2) of six catalytic PyrB chains organized as two trimers (C3), and six regulatory PyrI chains organized as three dimers (R2).

The catalysed reaction is carbamoyl phosphate + L-aspartate = N-carbamoyl-L-aspartate + phosphate + H(+). It functions in the pathway pyrimidine metabolism; UMP biosynthesis via de novo pathway; (S)-dihydroorotate from bicarbonate: step 2/3. In terms of biological role, catalyzes the condensation of carbamoyl phosphate and aspartate to form carbamoyl aspartate and inorganic phosphate, the committed step in the de novo pyrimidine nucleotide biosynthesis pathway. This is Aspartate carbamoyltransferase catalytic subunit from Bacillus subtilis (strain 168).